The chain runs to 160 residues: 6,7-dimethyl-8-ribityllumazine synthase (160 aa).

5-amino-6-(D-ribitylamino)uracil contacts are provided by residues Trp31, Ser65 to Glu67, and Cys89 to Val91. Asp94–Thr95 contributes to the (2S)-2-hydroxy-3-oxobutyl phosphate binding site. His97 functions as the Proton donor in the catalytic mechanism. Phe122 contacts 5-amino-6-(D-ribitylamino)uracil. Arg136 serves as a coordination point for (2S)-2-hydroxy-3-oxobutyl phosphate.

It belongs to the DMRL synthase family.

It carries out the reaction (2S)-2-hydroxy-3-oxobutyl phosphate + 5-amino-6-(D-ribitylamino)uracil = 6,7-dimethyl-8-(1-D-ribityl)lumazine + phosphate + 2 H2O + H(+). It participates in cofactor biosynthesis; riboflavin biosynthesis; riboflavin from 2-hydroxy-3-oxobutyl phosphate and 5-amino-6-(D-ribitylamino)uracil: step 1/2. In terms of biological role, catalyzes the formation of 6,7-dimethyl-8-ribityllumazine by condensation of 5-amino-6-(D-ribitylamino)uracil with 3,4-dihydroxy-2-butanone 4-phosphate. This is the penultimate step in the biosynthesis of riboflavin. The protein is 6,7-dimethyl-8-ribityllumazine synthase of Parabacteroides distasonis (strain ATCC 8503 / DSM 20701 / CIP 104284 / JCM 5825 / NCTC 11152).